Consider the following 656-residue polypeptide: Methylenetetrahydrofolate reductase (NADPH) (656 aa).

Positions 1–46 (MVNEARGNDSLNPCLEGSASSSSESSKDSSRCSTPGLDPERHERLR) are disordered. A phosphoserine mark is found at Ser-10, Ser-18, Ser-20, Ser-21, Ser-23, Ser-25, Ser-26, Ser-29, and Ser-30. A Phosphothreonine modification is found at Thr-34. Residue Glu-63 is the Proton donor/acceptor of the active site. Residues 63–68 (EFFPPR) and 94–95 (TW) each bind NAD(+). Residue Thr-94 is modified to Phosphothreonine. 94–95 (TW) is a binding site for FAD. The residue at position 103 (Ser-103) is a Phosphoserine. FAD is bound by residues His-127, 157–159 (RGD), 174–175 (YA), Tyr-197, 201–204 (HPEA), Asp-210, and Lys-217. Asp-159 contributes to the substrate binding site. 3 residues coordinate substrate: Gln-228, Tyr-321, and Arg-325. Ser-394 is subject to Phosphoserine. Position 451 is a phosphothreonine (Thr-451). Residues Asn-456, 461 to 464 (AAET), 481 to 485 (TINSQ), Thr-560, and Thr-573 contribute to the S-adenosyl-L-methionine site.

The protein belongs to the methylenetetrahydrofolate reductase family. In terms of assembly, homodimer. Requires FAD as cofactor. In terms of processing, phosphorylation of an N-terminal serine-rich phosphorylation region increases sensitivity to S-adenosylmethionine and inhibition.

It catalyses the reaction (6S)-5-methyl-5,6,7,8-tetrahydrofolate + NADP(+) = (6R)-5,10-methylene-5,6,7,8-tetrahydrofolate + NADPH + H(+). Its pathway is one-carbon metabolism; tetrahydrofolate interconversion. Allosterically regulated by S-adenosylmethionine (SAM). In terms of biological role, catalyzes the conversion of 5,10-methylenetetrahydrofolate to 5-methyltetrahydrofolate, a cosubstrate for homocysteine remethylation to methionine. Represents a key regulatory connection between the folate and methionine cycles. The polypeptide is Methylenetetrahydrofolate reductase (NADPH) (MTHFR) (Macaca fascicularis (Crab-eating macaque)).